The chain runs to 585 residues: Amyloid protein-binding protein 2 (585 aa).

TPR repeat units follow at residues 50 to 83 (QGRL…HHCF), 120 to 153 (IQVG…CTLH), 206 to 239 (AALY…ITAG), 288 to 321 (SDTL…RQSV), 333 to 367 (HEDL…ITHI), 429 to 462 (AKHY…KEQL), 471 to 505 (ALSV…GKKL), and 514 to 547 (EYDY…NRLR).

Component of a CRL2 E3 ubiquitin-protein ligase complex, also named ECS (Elongin BC-CUL2/5-SOCS-box protein) complex, composed of CUL2, Elongin BC (ELOB and ELOC), RBX1 and substrate-specific adapter APPBP2. Interacts with APP; APP interaction inhibits the E3 ubiquitin-protein ligase activity of the CRL2(APPBP2) complex. Post-translationally, rapidly degraded by the proteasome upon overexpression of a C-terminal fragment of APP.

The protein localises to the nucleus. Its subcellular location is the cytoplasm. The protein resides in the cytoskeleton. It is found in the membrane. Its pathway is protein modification; protein ubiquitination. E3 ubiquitin-protein ligase activity of the CRL2(APPBP2) complex is inhibited by APP. In terms of biological role, substrate-recognition component of a Cul2-RING (CRL2) E3 ubiquitin-protein ligase complex of the DesCEND (destruction via C-end degrons) pathway, which recognizes a C-degron located at the extreme C terminus of target proteins, leading to their ubiquitination and degradation. The C-degron recognized by the DesCEND pathway is usually a motif of less than ten residues and can be present in full-length proteins, truncated proteins or proteolytically cleaved forms. The CRL2(APPBP2) complex specifically recognizes proteins with a -Arg-Xaa-Xaa-Gly degron at the C-terminus, leading to their ubiquitination and degradation. The CRL2(APPBP2) complex mediates ubiquitination and degradation of truncated SELENOV selenoproteins produced by failed UGA/Sec decoding, which end with a -Arg-Xaa-Xaa-Gly degron. May play a role in intracellular protein transport: may be involved in the translocation of APP along microtubules toward the cell surface. The protein is Amyloid protein-binding protein 2 of Homo sapiens (Human).